A 112-amino-acid chain; its full sequence is Nucleoid-associated protein CA_C0126 (112 aa).

A compositionally biased stretch (basic and acidic residues) spans 93–102 (EEETSGEMKK). A disordered region spans residues 93–112 (EEETSGEMKKLTGGLNIPGL).

This sequence belongs to the YbaB/EbfC family. In terms of assembly, homodimer.

It is found in the cytoplasm. Its subcellular location is the nucleoid. Functionally, binds to DNA and alters its conformation. May be involved in regulation of gene expression, nucleoid organization and DNA protection. The sequence is that of Nucleoid-associated protein CA_C0126 from Clostridium acetobutylicum (strain ATCC 824 / DSM 792 / JCM 1419 / IAM 19013 / LMG 5710 / NBRC 13948 / NRRL B-527 / VKM B-1787 / 2291 / W).